The primary structure comprises 383 residues: Pantothenate kinase 1 (383 aa).

Belongs to the type II pantothenate kinase family. In terms of tissue distribution, highly expressed in leaves and developing seeds. Expressed in roots, stems and flowers.

It catalyses the reaction (R)-pantothenate + ATP = (R)-4'-phosphopantothenate + ADP + H(+). It participates in cofactor biosynthesis; coenzyme A biosynthesis; CoA from (R)-pantothenate: step 1/5. Its activity is regulated as follows. Regulated by feedback inhibition by malonyl-CoA. Its function is as follows. Catalyzes the phosphorylation of pantothenate the first step in CoA biosynthesis. May play a role in the physiological regulation of the intracellular CoA concentration. Functionally redudant with PANK2. The sequence is that of Pantothenate kinase 1 (PANK1) from Arabidopsis thaliana (Mouse-ear cress).